The following is an 836-amino-acid chain: Serine/threonine-protein kinase 1 (836 aa).

Residues 1 to 12 show a composition bias toward basic residues; sequence MDHNSPKSRRSR. The tract at residues 1–244 is disordered; that stretch reads MDHNSPKSRR…SLPDSITRED (244 aa). Basic and acidic residues predominate over residues 28–40; it reads SDSDSDQGRDRDK. 3 stretches are compositionally biased toward acidic residues: residues 64-75, 95-105, and 145-163; these read DGEGEEDDDDDS, DYDDDDGDESG, and EESS…DDGD. The segment covering 224 to 238 has biased composition (polar residues); that stretch reads MQQQNSKMSTTSLPD. The Protein kinase domain occupies 249-503; it reads YEFLNELGKG…AAEMLKHKFV (255 aa). ATP-binding positions include 255-263 and Lys278; that span reads LGKGSYGSV. Catalysis depends on Asp371, which acts as the Proton acceptor. Disordered stretches follow at residues 539–571, 600–640, and 760–780; these read LEDT…APLT, EDET…DSWI, and TSSD…PLPP. The segment covering 562–571 has biased composition (polar residues); sequence PQNSTEAPLT. Residues 606 to 618 are compositionally biased toward basic and acidic residues; it reads SDSRSQLVREKES.

The protein belongs to the protein kinase superfamily. STE Ser/Thr protein kinase family. STE20 subfamily. As to quaternary structure, interacts with MOB1A and MOB1B via its N-terminal region at the plasma membrane and in the nucleus. Binds to BIK1 to phosphorylate and stabilize it. Interacts with and phosphorylates RBOHD upon flagellin perception to activate it. Mn(2+) serves as cofactor. Autophosphorylates. As to expression, mostly expressed in mature tissues of roots, shoots, hypocotyls, cotyledons, stems, leaves and flowers, as well as in the shoot apical meristem (SAM).

The protein resides in the cell membrane. It localises to the nucleus. The protein localises to the golgi apparatus. It is found in the trans-Golgi network. Its subcellular location is the early endosome. It carries out the reaction L-seryl-[protein] + ATP = O-phospho-L-seryl-[protein] + ADP + H(+). The enzyme catalyses L-threonyl-[protein] + ATP = O-phospho-L-threonyl-[protein] + ADP + H(+). Serine/threonine-protein kinase. Regulates organ size in coordination with MOB1A by modulating cell proliferation and cell expansion, possibly by facilitating cell cycle exit. Positive regulator of the pathogen-associated molecular pattern (PAMP, e.g. flg22)-triggered immunity (PTI) signaling by stabilizing BIK1 and activating RBOHD by phosphorylation to promote the extracellular reactive oxygen species (ROS) burst involved in defense responses to bacterial infection. This chain is Serine/threonine-protein kinase 1, found in Arabidopsis thaliana (Mouse-ear cress).